The primary structure comprises 563 residues: Urocanate hydratase (563 aa).

NAD(+) contacts are provided by residues 53 to 54 (GG), Gln131, 177 to 179 (GMG), Glu197, Arg202, 243 to 244 (NA), 264 to 268 (QTSAH), 274 to 275 (YL), and Tyr323. Residue Cys411 is part of the active site. Gly493 provides a ligand contact to NAD(+).

Belongs to the urocanase family. The cofactor is NAD(+).

It localises to the cytoplasm. It carries out the reaction 4-imidazolone-5-propanoate = trans-urocanate + H2O. The protein operates within amino-acid degradation; L-histidine degradation into L-glutamate; N-formimidoyl-L-glutamate from L-histidine: step 2/3. In terms of biological role, catalyzes the conversion of urocanate to 4-imidazolone-5-propionate. In Yersinia enterocolitica serotype O:8 / biotype 1B (strain NCTC 13174 / 8081), this protein is Urocanate hydratase.